The chain runs to 166 residues: Large ribosomal subunit protein uL10 (166 aa).

It belongs to the universal ribosomal protein uL10 family. As to quaternary structure, part of the ribosomal stalk of the 50S ribosomal subunit. The N-terminus interacts with L11 and the large rRNA to form the base of the stalk. The C-terminus forms an elongated spine to which L12 dimers bind in a sequential fashion forming a multimeric L10(L12)X complex.

Functionally, forms part of the ribosomal stalk, playing a central role in the interaction of the ribosome with GTP-bound translation factors. The protein is Large ribosomal subunit protein uL10 of Geobacillus sp. (strain WCH70).